Reading from the N-terminus, the 332-residue chain is Glyceraldehyde-3-phosphate dehydrogenase 1 (332 aa).

NAD(+) is bound by residues 11–12, Asp-33, and Arg-78; that span reads RI. Residues 149 to 151, Thr-180, 209 to 210, and Arg-232 each bind D-glyceraldehyde 3-phosphate; these read SCT and TG. The active-site Nucleophile is Cys-150. Asn-314 provides a ligand contact to NAD(+).

It belongs to the glyceraldehyde-3-phosphate dehydrogenase family. As to quaternary structure, homotetramer.

Its subcellular location is the cytoplasm. It carries out the reaction D-glyceraldehyde 3-phosphate + phosphate + NAD(+) = (2R)-3-phospho-glyceroyl phosphate + NADH + H(+). It participates in carbohydrate degradation; glycolysis; pyruvate from D-glyceraldehyde 3-phosphate: step 1/5. This is Glyceraldehyde-3-phosphate dehydrogenase 1 (GPD1) from Candida glabrata (strain ATCC 2001 / BCRC 20586 / JCM 3761 / NBRC 0622 / NRRL Y-65 / CBS 138) (Yeast).